The primary structure comprises 180 residues: Cytidylate kinase (180 aa).

7–15 (GLPGSGTST) contributes to the ATP binding site.

It belongs to the cytidylate kinase family. Type 2 subfamily.

It localises to the cytoplasm. It catalyses the reaction CMP + ATP = CDP + ADP. It carries out the reaction dCMP + ATP = dCDP + ADP. The protein is Cytidylate kinase (cmk) of Methanosarcina mazei (strain ATCC BAA-159 / DSM 3647 / Goe1 / Go1 / JCM 11833 / OCM 88) (Methanosarcina frisia).